Consider the following 445-residue polypeptide: Dolichyl-diphosphooligosaccharide--protein glycosyltransferase 48 kDa subunit (445 aa).

The first 20 residues, 1–20 (MRWLPGLLLIASIGFHQSLA), serve as a signal peptide directing secretion. Over 21-405 (DRVLVLGETA…YERFIRSAYP (385 aa)) the chain is Lumenal. A helical membrane pass occupies residues 406–426 (YYASSFSMMAGLVLFSIVYLY). Residues 427–445 (HKDTPVKGAKVLDSEKKKN) are Cytoplasmic-facing.

The protein belongs to the DDOST 48 kDa subunit family. As to quaternary structure, component of the oligosaccharyltransferase (OST) complex.

The protein resides in the endoplasmic reticulum membrane. Its pathway is protein modification; protein glycosylation. Its function is as follows. Subunit of the oligosaccharyl transferase (OST) complex that catalyzes the initial transfer of a defined glycan (Glc(3)Man(9)GlcNAc(2) in eukaryotes) from the lipid carrier dolichol-pyrophosphate to an asparagine residue within an Asn-X-Ser/Thr consensus motif in nascent polypeptide chains, the first step in protein N-glycosylation. N-glycosylation occurs cotranslationally and the complex associates with the Sec61 complex at the channel-forming translocon complex that mediates protein translocation across the endoplasmic reticulum (ER). All subunits are required for a maximal enzyme activity. Required for the assembly of both SST3A- and SS3B-containing OST complexes. Required for normal lifespan. The chain is Dolichyl-diphosphooligosaccharide--protein glycosyltransferase 48 kDa subunit from Caenorhabditis elegans.